We begin with the raw amino-acid sequence, 471 residues long: V-type ATP synthase beta chain (471 aa).

Belongs to the ATPase alpha/beta chains family.

Produces ATP from ADP in the presence of a proton gradient across the membrane. The V-type beta chain is a regulatory subunit. This chain is V-type ATP synthase beta chain (atpB), found in Deinococcus radiodurans (strain ATCC 13939 / DSM 20539 / JCM 16871 / CCUG 27074 / LMG 4051 / NBRC 15346 / NCIMB 9279 / VKM B-1422 / R1).